A 158-amino-acid polypeptide reads, in one-letter code: Vasotocin-neurophysin VT 2 (158 aa).

The first 19 residues, 1-19, serve as a signal peptide directing secretion; the sequence is MPHSTLLLCVIGLLAFSSA. The cysteines at positions 20 and 25 are disulfide-linked. At Gly28 the chain carries Glycine amide. Cystine bridges form between Cys41-Cys85, Cys44-Cys58, Cys52-Cys75, Cys59-Cys65, Cys92-Cys105, Cys99-Cys117, and Cys106-Cys111.

The protein belongs to the vasopressin/oxytocin family. Seven disulfide bonds are present in neurophysin.

Its subcellular location is the secreted. Its function is as follows. Vasotocin is an antidiuretic hormone. The protein is Vasotocin-neurophysin VT 2 of Oncorhynchus keta (Chum salmon).